Reading from the N-terminus, the 359-residue chain is Serine hydrolase-like protein DDB_G0286239 (359 aa).

In terms of domain architecture, AB hydrolase-1 spans 38-289 (LALHGWLDNA…VPGSHHFHME (252 aa)). The active site involves Ser111. Residues 310–359 (FTPSSTTQQQQQQQQSAENKKGDNHNQIAEQDLSTSNTSSPIISKPKPNL) are disordered. A compositionally biased stretch (polar residues) spans 334–351 (HNQIAEQDLSTSNTSSPI).

This sequence belongs to the AB hydrolase superfamily.

Functionally, probable serine hydrolase. This chain is Serine hydrolase-like protein DDB_G0286239, found in Dictyostelium discoideum (Social amoeba).